Here is a 448-residue protein sequence, read N- to C-terminus: UPF0210 protein Pisl_0759 (448 aa).

The protein belongs to the UPF0210 family.

This chain is UPF0210 protein Pisl_0759, found in Pyrobaculum islandicum (strain DSM 4184 / JCM 9189 / GEO3).